The following is a 319-amino-acid chain: MENHSKNIKIFTGNSHPELAREIAKALNIPLGKAEVGTFSDGEISVNIKETVRGCDVFIVQSTCSPVNNNLMELLIMIDAFKRASAGRINAVIPYYGYARQDRKAKSRDPITAKLVADLLTAAGADRVLTMDLHAAQIQGYFNIPVDHLLGSPILAKYFVEKGLADRDDVVVVSPDLGSVTRARKFADKLNAPIAIIDKRRPKANVSEIMNIIGDVKDKVCILIDDMIDTAGTITNAANALKDLGAKNVYACCTHGVLSGPAFERINNSAIEELVMLNTIALPEGEGLNKFKSLSVAPIMADAINRIYDDEPLSGLFQD.

ATP-binding positions include 41–43 and 100–101; these read DGE and RQ. Residues His134 and Asp176 each coordinate Mg(2+). The active site involves Lys199. D-ribose 5-phosphate-binding positions include Arg201, Asp225, and 229 to 233; that span reads DTAGT.

Belongs to the ribose-phosphate pyrophosphokinase family. Class I subfamily. As to quaternary structure, homohexamer. Mg(2+) is required as a cofactor.

Its subcellular location is the cytoplasm. The enzyme catalyses D-ribose 5-phosphate + ATP = 5-phospho-alpha-D-ribose 1-diphosphate + AMP + H(+). Its pathway is metabolic intermediate biosynthesis; 5-phospho-alpha-D-ribose 1-diphosphate biosynthesis; 5-phospho-alpha-D-ribose 1-diphosphate from D-ribose 5-phosphate (route I): step 1/1. In terms of biological role, involved in the biosynthesis of the central metabolite phospho-alpha-D-ribosyl-1-pyrophosphate (PRPP) via the transfer of pyrophosphoryl group from ATP to 1-hydroxyl of ribose-5-phosphate (Rib-5-P). The protein is Ribose-phosphate pyrophosphokinase of Clostridium perfringens (strain 13 / Type A).